The following is a 412-amino-acid chain: MAKRPLGLGKQSREKKRKVESVEKKSDEPSRESTPVRSQMSVELDDDADLDDELAQLKGLWSKYFHSDRDDEYVLNGIVHECDRLLRLSEEDKEIKKTLNDIFHGIYALALSELTIFKAGDEEATEEKRKKDVSSFFENAIERVELGLSHFPESQFLKLVLAKIIFQRIPLEYISNLHLKSKDKKLDLVGQLEHGKKHFSIYENDTEFTFEILQMVNDLLDIVENFGREQSIQEGIDSDNEEEEELIDIELEPEHPVYPLQQSLEANYEWLRNHFDKLLDNTNTDMKIYASIANTLGELYLKKAEEPSKVFLSLQYDDGSSKKVSDKEAKNVQETALKHTKKALEYLEKAKLEDDPDTWVQVAEAYIDLGNLLDNESAEQEEAYKTAEEILGKANKASHGKFQDVLDNFLQG.

Positions 1–45 are disordered; it reads MAKRPLGLGKQSREKKRKVESVEKKSDEPSRESTPVRSQMSVELD. Over residues 17 to 31 the composition is skewed to basic and acidic residues; the sequence is RKVESVEKKSDEPSR. A Phosphoserine modification is found at Ser-30. Over residues 32–41 the composition is skewed to polar residues; it reads ESTPVRSQMS.

It belongs to the ETT1 family. As to quaternary structure, interacts with STM1.

It is found in the nucleus. Its function is as follows. Required for correct translation termination and probably involved in regulation of hypoxic gene expression in association TPA1. Inhibits replication of Brome mosaic virus. This chain is Enhancer of translation termination 1 (ETT1), found in Saccharomyces cerevisiae (strain RM11-1a) (Baker's yeast).